The primary structure comprises 130 residues: Small ribosomal subunit protein uS8 (130 aa).

This sequence belongs to the universal ribosomal protein uS8 family. Part of the 30S ribosomal subunit.

Its function is as follows. One of the primary rRNA binding proteins, it binds directly to 16S rRNA central domain where it helps coordinate assembly of the platform of the 30S subunit. The polypeptide is Small ribosomal subunit protein uS8 (Methanosphaera stadtmanae (strain ATCC 43021 / DSM 3091 / JCM 11832 / MCB-3)).